We begin with the raw amino-acid sequence, 241 residues long: Orotidine 5'-phosphate decarboxylase (241 aa).

Residues Asp15, Lys36, 63–72 (DLKFHDIPNT), Thr127, Arg189, Gln198, Gly218, and Arg219 contribute to the substrate site. The active-site Proton donor is Lys65.

The protein belongs to the OMP decarboxylase family. Type 1 subfamily. As to quaternary structure, homodimer.

It carries out the reaction orotidine 5'-phosphate + H(+) = UMP + CO2. It functions in the pathway pyrimidine metabolism; UMP biosynthesis via de novo pathway; UMP from orotate: step 2/2. Functionally, catalyzes the decarboxylation of orotidine 5'-monophosphate (OMP) to uridine 5'-monophosphate (UMP). The chain is Orotidine 5'-phosphate decarboxylase from Prochlorococcus marinus (strain MIT 9211).